The chain runs to 533 residues: DnaJ homolog subfamily C member 21 (533 aa).

In terms of domain architecture, J spans 3 to 70; the sequence is CHYEALGVRR…ERAWYDNHRE (68 aa). Disordered stretches follow at residues 278-311, 327-473, and 503-533; these read QFGDGSGEDEAEDQELRDGQDGKDSDEAEDAELY, KAMR…RVPA, and KATGHARAPSSSTSLNSVTNSRNKKEKRKNR. Phosphoserine is present on residues Ser-283 and Ser-302. A compositionally biased stretch (basic and acidic residues) spans 291–302; sequence QELRDGQDGKDS. The segment at 315-339 adopts a C2H2-type 1 zinc-finger fold; it reads YCPACDKSFKTEKAMRNHEKSKKHR. The span at 357–369 shows a compositional bias: polar residues; that stretch reads SGPQTDENSLNAN. At Ser-370 the chain carries Phosphoserine. Over residues 381-392 the composition is skewed to basic residues; sequence KLSRKQKKKKQK. Residues 393-403 are compositionally biased toward polar residues; the sequence is PAQNYDDNFNE. A compositionally biased stretch (basic residues) spans 455–464; sequence SKPKGKKAKD. A C2H2-type 2 zinc finger spans residues 484–508; it reads SCTTCHSEFPSRNKLFDHLKATGHA. At Ser-512 the chain carries Phosphoserine. The span at 512 to 523 shows a compositional bias: low complexity; that stretch reads SSSTSLNSVTNS. Residues 524 to 533 show a composition bias toward basic residues; the sequence is RNKKEKRKNR.

In terms of assembly, interacts with HSPA8, PA2G4 and ZNF622.

The protein localises to the cytoplasm. It is found in the nucleus. The protein resides in the nucleolus. Functionally, may act as a co-chaperone for HSP70. May play a role in ribosomal RNA (rRNA) biogenesis, possibly in the maturation of the 60S subunit. Binds the precursor 45S rRNA. In Bos taurus (Bovine), this protein is DnaJ homolog subfamily C member 21 (DNAJC21).